The sequence spans 122 residues: Large ribosomal subunit protein uL14c (122 aa).

This sequence belongs to the universal ribosomal protein uL14 family. As to quaternary structure, part of the 50S ribosomal subunit.

The protein localises to the plastid. The protein resides in the chloroplast. Binds to 23S rRNA. The chain is Large ribosomal subunit protein uL14c from Lotus japonicus (Lotus corniculatus var. japonicus).